A 226-amino-acid chain; its full sequence is Ribose-5-phosphate isomerase A (226 aa).

Residues 28-31, 80-83, and 93-96 each bind substrate; these read TGST, DGAD, and KGGG. Glu102 (proton acceptor) is an active-site residue. Residue Lys120 coordinates substrate.

It belongs to the ribose 5-phosphate isomerase family. As to quaternary structure, homodimer.

The enzyme catalyses aldehydo-D-ribose 5-phosphate = D-ribulose 5-phosphate. Its pathway is carbohydrate degradation; pentose phosphate pathway; D-ribose 5-phosphate from D-ribulose 5-phosphate (non-oxidative stage): step 1/1. In terms of biological role, catalyzes the reversible conversion of ribose-5-phosphate to ribulose 5-phosphate. The protein is Ribose-5-phosphate isomerase A of Caulobacter sp. (strain K31).